A 791-amino-acid polypeptide reads, in one-letter code: Splicing factor 3A subunit 1 (791 aa).

The tract at residues methionine 1–glycine 41 is disordered. Residue lysine 20 forms a Glycyl lysine isopeptide (Lys-Gly) (interchain with G-Cter in SUMO2) linkage. Over residues glutamine 21 to threonine 34 the composition is skewed to basic and acidic residues. An SURP motif 1 repeat occupies isoleucine 52–tyrosine 94. Lysine 55 is subject to N6-acetyllysine. A Glycyl lysine isopeptide (Lys-Gly) (interchain with G-Cter in SUMO2) cross-link involves residue lysine 131. An SURP motif 2 repeat occupies valine 166–phenylalanine 208. The tract at residues glycine 318–serine 411 is disordered. Serine 320 and serine 329 each carry phosphoserine. Positions serine 320–lysine 336 are enriched in acidic residues. Polar residues predominate over residues threonine 340–glutamine 351. Over residues aspartate 352–glutamate 362 the composition is skewed to acidic residues. Serine 357 carries the post-translational modification Phosphoserine. Over residues valine 366–proline 382 the composition is skewed to pro residues. Residues isoleucine 386–alanine 395 show a composition bias toward basic and acidic residues. The residue at position 411 (serine 411) is a Phosphoserine. Lysine 422 participates in a covalent cross-link: Glycyl lysine isopeptide (Lys-Gly) (interchain with G-Cter in SUMO2). Serine 449 is modified (phosphoserine). Phosphotyrosine is present on tyrosine 454. A compositionally biased stretch (basic and acidic residues) spans isoleucine 486–tryptophan 500. Disordered stretches follow at residues isoleucine 486 to alanine 516, histidine 528 to proline 582, and proline 664 to lysine 684. Residue lysine 497 forms a Glycyl lysine isopeptide (Lys-Gly) (interchain with G-Cter in SUMO2) linkage. A Phosphoserine modification is found at serine 506. The span at methionine 507–alanine 516 shows a compositional bias: polar residues. Lysine 540 participates in a covalent cross-link: Glycyl lysine isopeptide (Lys-Gly) (interchain with G-Cter in SUMO2). Polar residues predominate over residues alanine 561–proline 570. Residues proline 664 to proline 673 show a composition bias toward pro residues. The interval proline 678–lysine 700 is required and sufficient for nuclear import. Lysine 684 participates in a covalent cross-link: Glycyl lysine isopeptide (Lys-Gly) (interchain with G-Cter in SUMO2). The region spanning isoleucine 705–glycine 788 is the Ubiquitin-like domain. Position 757 is a phosphotyrosine (tyrosine 757).

Component of the 17S U2 SnRNP complex, a ribonucleoprotein complex that contains small nuclear RNA (snRNA) U2 and a number of specific proteins. Part of the SF3A subcomplex of the 17S U2 SnRNP complex which is composed of three subunits; SF3A3/SAP61, SF3A2/SAP62 and SF3A1/SAP114. SF3A associates with the splicing factor SF3B and a 12S RNA unit to form the mature 17S U2 small nuclear ribonucleoprotein complex (17S U2 snRNP). SF3A1 functions as a scaffold that interacts directly with both SF3A2 and SF3A3. Identified in the spliceosome 'E' complex, a precursor of the spliceosome 'A' complex. Identified in the spliceosome 'A' and 'B' complexes. Identified in the spliceosome 'C' complex. Interacts with P2RX6; resulting in a reduction of the splicing activity.

It localises to the nucleus. It is found in the nucleus speckle. Component of the 17S U2 SnRNP complex of the spliceosome, a large ribonucleoprotein complex that removes introns from transcribed pre-mRNAs. The 17S U2 SnRNP complex (1) directly participates in early spliceosome assembly and (2) mediates recognition of the intron branch site during pre-mRNA splicing by promoting the selection of the pre-mRNA branch-site adenosine, the nucleophile for the first step of splicing. Within the 17S U2 SnRNP complex, SF3A1 is part of the SF3A subcomplex that contributes to the assembly of the 17S U2 snRNP, and the subsequent assembly of the pre-spliceosome 'E' complex and the pre-catalytic spliceosome 'A' complex. Involved in pre-mRNA splicing as a component of pre-catalytic spliceosome 'B' complexes. This chain is Splicing factor 3A subunit 1 (Sf3a1), found in Mus musculus (Mouse).